We begin with the raw amino-acid sequence, 275 residues long: 4-hydroxy-tetrahydrodipicolinate reductase (275 aa).

NAD(+) contacts are provided by residues G13–M18, G108–T110, and V134–F137. H164 (proton donor/acceptor) is an active-site residue. Position 165 (H165) interacts with (S)-2,3,4,5-tetrahydrodipicolinate. K168 serves as the catalytic Proton donor. Residue G174–T175 coordinates (S)-2,3,4,5-tetrahydrodipicolinate.

Belongs to the DapB family.

The protein localises to the cytoplasm. The catalysed reaction is (S)-2,3,4,5-tetrahydrodipicolinate + NAD(+) + H2O = (2S,4S)-4-hydroxy-2,3,4,5-tetrahydrodipicolinate + NADH + H(+). It carries out the reaction (S)-2,3,4,5-tetrahydrodipicolinate + NADP(+) + H2O = (2S,4S)-4-hydroxy-2,3,4,5-tetrahydrodipicolinate + NADPH + H(+). The protein operates within amino-acid biosynthesis; L-lysine biosynthesis via DAP pathway; (S)-tetrahydrodipicolinate from L-aspartate: step 4/4. Catalyzes the conversion of 4-hydroxy-tetrahydrodipicolinate (HTPA) to tetrahydrodipicolinate. The protein is 4-hydroxy-tetrahydrodipicolinate reductase of Gloeothece citriformis (strain PCC 7424) (Cyanothece sp. (strain PCC 7424)).